We begin with the raw amino-acid sequence, 137 residues long: Ribosome-binding factor A (137 aa).

A disordered region spans residues 112-137 (KKDEVKEDESHEDESTDHTEETNEEP). The span at 127-137 (TDHTEETNEEP) shows a compositional bias: basic and acidic residues.

It belongs to the RbfA family. As to quaternary structure, monomer. Binds 30S ribosomal subunits, but not 50S ribosomal subunits or 70S ribosomes.

The protein resides in the cytoplasm. Functionally, one of several proteins that assist in the late maturation steps of the functional core of the 30S ribosomal subunit. Associates with free 30S ribosomal subunits (but not with 30S subunits that are part of 70S ribosomes or polysomes). Required for efficient processing of 16S rRNA. May interact with the 5'-terminal helix region of 16S rRNA. In Coprothermobacter proteolyticus (strain ATCC 35245 / DSM 5265 / OCM 4 / BT), this protein is Ribosome-binding factor A.